The primary structure comprises 436 residues: Putative UDP-arabinose 4-epimerase 4 (436 aa).

The segment at 1-20 is disordered; the sequence is MLNSSGVRTQRRSPRPLSLG. Topologically, residues 1-60 are cytoplasmic; sequence MLNSSGVRTQRRSPRPLSLGGRKIITPTKFAYDHHNPDKVLDFVEMDCLEPKTKNNLTGK. A helical; Signal-anchor for type II membrane protein membrane pass occupies residues 61-81; the sequence is LLLVASLLILAIIVISQSSSF. Residues 82–436 lie on the Lumenal side of the membrane; sequence TSPSAFSQRE…KIHPHGYNSY (355 aa). NAD(+) is bound at residue 96–127; sequence HVLVTGGAGYIGSHAALRLLRDSYRVTIVDNL. The active-site Proton acceptor is tyrosine 244.

It belongs to the NAD(P)-dependent epimerase/dehydratase family. Requires NAD(+) as cofactor.

The protein localises to the golgi apparatus. It localises to the golgi stack membrane. The enzyme catalyses UDP-beta-L-arabinopyranose = UDP-alpha-D-xylose. It functions in the pathway nucleotide-sugar biosynthesis; UDP-L-arabinose biosynthesis; UDP-L-arabinose from UDP-alpha-D-xylose: step 1/1. The protein operates within cell wall biogenesis; cell wall polysaccharide biosynthesis. The chain is Putative UDP-arabinose 4-epimerase 4 from Arabidopsis thaliana (Mouse-ear cress).